Reading from the N-terminus, the 303-residue chain is Probable acetylxylan esterase A (303 aa).

Positions 1–23 are cleaved as a signal peptide; it reads MLSTHLLFLATTLLTSLFHPIAA. Catalysis depends on Ser-147, which acts as the Charge relay system. Asn-189 carries an N-linked (GlcNAc...) asparagine glycan.

Belongs to the carbohydrate esterase 1 (CE1) family. AxeA subfamily. In terms of assembly, monomer.

The protein localises to the secreted. The catalysed reaction is Deacetylation of xylans and xylo-oligosaccharides.. Its pathway is glycan degradation; xylan degradation. Its function is as follows. Acetylxylan esterase involved in the hydrolysis of xylan, a major structural heterogeneous polysaccharide found in plant biomass representing the second most abundant polysaccharide in the biosphere, after cellulose. Degrades acetylated xylans by cleaving acetyl side groups from the hetero-xylan backbone. This is Probable acetylxylan esterase A (axeA) from Aspergillus niger (strain ATCC MYA-4892 / CBS 513.88 / FGSC A1513).